The chain runs to 148 residues: Large ribosomal subunit protein bL9 (148 aa).

Belongs to the bacterial ribosomal protein bL9 family.

Binds to the 23S rRNA. In Bacillus mycoides (strain KBAB4) (Bacillus weihenstephanensis), this protein is Large ribosomal subunit protein bL9.